A 185-amino-acid chain; its full sequence is Tetratricopeptide repeat protein 36 homolog (185 aa).

TPR repeat units lie at residues Ser-53–Ala-86, Val-88–Gln-119, and Cys-125–Phe-158.

The protein belongs to the TTC36 family.

The chain is Tetratricopeptide repeat protein 36 homolog from Drosophila pseudoobscura pseudoobscura (Fruit fly).